The following is a 92-amino-acid chain: Small ribosomal subunit protein uS19 (92 aa).

It belongs to the universal ribosomal protein uS19 family.

Functionally, protein S19 forms a complex with S13 that binds strongly to the 16S ribosomal RNA. The polypeptide is Small ribosomal subunit protein uS19 (Bacillus licheniformis (strain ATCC 14580 / DSM 13 / JCM 2505 / CCUG 7422 / NBRC 12200 / NCIMB 9375 / NCTC 10341 / NRRL NRS-1264 / Gibson 46)).